Reading from the N-terminus, the 64-residue chain is Large ribosomal subunit protein bL32 (64 aa).

Over residues 1 to 15 (MAVPKRKVSKSRRDS) the composition is skewed to basic residues. The interval 1-21 (MAVPKRKVSKSRRDSRRAQTF) is disordered.

This sequence belongs to the bacterial ribosomal protein bL32 family.

In Symbiobacterium thermophilum (strain DSM 24528 / JCM 14929 / IAM 14863 / T), this protein is Large ribosomal subunit protein bL32.